Consider the following 101-residue polypeptide: uncharacterized protein (101 aa).

This is an uncharacterized protein from Gracula (BFDV).